The sequence spans 458 residues: RuvB-like helicase 1 (458 aa).

Over residues 1 to 18 (MVQITEVKENQSSRESRT) the composition is skewed to basic and acidic residues. The disordered stretch occupies residues 1–20 (MVQITEVKENQSSRESRTAA). 73-80 (GPPATGKT) lines the ATP pocket.

Belongs to the RuvB family. May form heterododecamers with RVB2. Component of the SWR1 chromatin remodeling complex, the INO80 chromatin remodeling complex, and of the R2TP complex.

The protein localises to the nucleus. It catalyses the reaction ATP + H2O = ADP + phosphate + H(+). Its function is as follows. DNA helicase which participates in several chromatin remodeling complexes, including the SWR1 and the INO80 complexes. The SWR1 complex mediates the ATP-dependent exchange of histone H2A for the H2A variant HZT1 leading to transcriptional regulation of selected genes by chromatin remodeling. The INO80 complex remodels chromatin by shifting nucleosomes and is involved in DNA repair. Also involved in pre-rRNA processing. This is RuvB-like helicase 1 (RVB1) from Candida albicans (strain SC5314 / ATCC MYA-2876) (Yeast).